The primary structure comprises 274 residues: 2-dehydro-3-deoxyphosphooctonate aldolase (274 aa).

It belongs to the KdsA family.

It localises to the cytoplasm. The catalysed reaction is D-arabinose 5-phosphate + phosphoenolpyruvate + H2O = 3-deoxy-alpha-D-manno-2-octulosonate-8-phosphate + phosphate. It participates in carbohydrate biosynthesis; 3-deoxy-D-manno-octulosonate biosynthesis; 3-deoxy-D-manno-octulosonate from D-ribulose 5-phosphate: step 2/3. The protein operates within bacterial outer membrane biogenesis; lipopolysaccharide biosynthesis. The sequence is that of 2-dehydro-3-deoxyphosphooctonate aldolase from Legionella pneumophila (strain Lens).